A 665-amino-acid polypeptide reads, in one-letter code: Phosphatidylinositol-3-phosphate phosphatase MTMR1 (665 aa).

The residue at position 1 (Met1) is an N-acetylmethionine. The span at 1 to 11 shows a compositional bias: low complexity; that stretch reads MDRPAAAAAAG. A disordered region spans residues 1 to 51; sequence MDRPAAAAAAGCEGGGGPNPGPAGGRRPPRAAGGATAGSRQPSVETLDSPT. Over residues 12–24 the composition is skewed to gly residues; the sequence is CEGGGGPNPGPAG. Positions 39 to 51 are enriched in polar residues; sequence SRQPSVETLDSPT. Residues Ser43 and Ser49 each carry the phosphoserine modification. In terms of domain architecture, GRAM spans 90–161; the sequence is NKLAQMEEAP…GVISRVEKIG (72 aa). A Myotubularin phosphatase domain is found at 226-601; the sequence is GWKVYDPVSE…SHLELWVNYY (376 aa). Residues Asn351, Asn376, and Ile377 each coordinate a 1,2-diacyl-sn-glycero-3-phospho-(1D-myo-inositol-3-phosphate). Residue Cys438 is the Phosphocysteine intermediate of the active site. Residues Ser439, Asp440, Gly441, Trp442, Asp443, Arg444, and Arg484 each contribute to the a 1,2-diacyl-sn-glycero-3-phospho-(1D-myo-inositol-3-phosphate) site. Position 439 (Ser439) interacts with phosphate. Gly441, Trp442, Asp443, and Arg444 together coordinate phosphate. Residues 608–665 are required for dimerization; sequence MRPQMPIHQNLKELLAVRAELQKRVEGLQREVATRAVSSSSERGSSPSHSATSVHTSV. Residues 642 to 665 form a disordered region; sequence RAVSSSSERGSSPSHSATSVHTSV. Over residues 645-657 the composition is skewed to low complexity; sequence SSSSERGSSPSHS.

Belongs to the protein-tyrosine phosphatase family. Non-receptor class myotubularin subfamily. As to quaternary structure, homodimer.

It localises to the cell membrane. The protein localises to the cytoplasm. The catalysed reaction is a 1,2-diacyl-sn-glycero-3-phospho-(1D-myo-inositol-3-phosphate) + H2O = a 1,2-diacyl-sn-glycero-3-phospho-(1D-myo-inositol) + phosphate. It catalyses the reaction 1,2-dioctanoyl-sn-glycero-3-phospho-(1-D-myo-inositol-3-phosphate) + H2O = 1,2-dioctanoyl-sn-glycero-3-phospho-(1D-myo-inositol) + phosphate. The enzyme catalyses a 1,2-diacyl-sn-glycero-3-phospho-(1D-myo-inositol-3,5-bisphosphate) + H2O = a 1,2-diacyl-sn-glycero-3-phospho-(1D-myo-inositol-5-phosphate) + phosphate. Its function is as follows. Lipid phosphatase that specifically dephosphorylates the D-3 position of phosphatidylinositol 3-phosphate, generating phosphatidylinositol. Could also dephosphorylate phosphatidylinositol 3,5-bisphosphate to produce phosphatidylinositol 5-phosphate. The sequence is that of Phosphatidylinositol-3-phosphate phosphatase MTMR1 from Homo sapiens (Human).